A 596-amino-acid polypeptide reads, in one-letter code: Two-component response regulator ARR12 (596 aa).

The 116-residue stretch at 18-133 (RVLAVDDDQT…ELKNIWQHVV (116 aa)) folds into the Response regulatory domain. A 4-aspartylphosphate modification is found at aspartate 69. Residues 138-153 (DKNRGSNNNGDKRDGS) show a composition bias toward basic and acidic residues. Residues 138 to 192 (DKNRGSNNNGDKRDGSGNEGVGNSDQNNGKGNRKRKDQYNEDEDEDRDDNDDSCA) form a disordered region. Residues 158-167 (VGNSDQNNGK) are compositionally biased toward polar residues. Over residues 177–189 (NEDEDEDRDDNDD) the composition is skewed to acidic residues. A Nuclear localization signal motif is present at residues 194–197 (KKQR). A DNA-binding region (myb-like GARP) is located at residues 197 to 247 (RVVWTVELHKKFVAAVNQLGYEKAMPKKILDLMNVEKLTRENVASHLQKFR). Residues 437–467 (NAVSSSTHPPPPAHNSNSINHQFDVSPLPHS) are disordered. The segment covering 450 to 459 (HNSNSINHQF) has biased composition (polar residues).

The protein belongs to the ARR family. Type-B subfamily. Binds the target DNA as a monomer. Post-translationally, two-component system major event consists of a His-to-Asp phosphorelay between a sensor histidine kinase (HK) and a response regulator (RR). In plants, the His-to-Asp phosphorelay involves an additional intermediate named Histidine-containing phosphotransfer protein (HPt). This multistep phosphorelay consists of a His-Asp-His-Asp sequential transfer of a phosphate group between first a His and an Asp of the HK protein, followed by the transfer to a conserved His of the HPt protein and finally the transfer to an Asp in the receiver domain of the RR protein. As to expression, detected in the whole plant. Predominantly expressed in leaves. Expressed at the root transition zone.

The protein localises to the nucleus. Its function is as follows. Transcriptional activator that binds specifically to the DNA sequence 5'-[AG]GATT-3'. Functions as a response regulator involved in His-to-Asp phosphorelay signal transduction system. Phosphorylation of the Asp residue in the receiver domain activates the ability of the protein to promote the transcription of target genes. Could directly activate some type-A response regulators in response to cytokinins. Involved in the root-meristem size determination through the regulation of cell differentiation. Involved in activating SHY2 during meristem growth and controls PIN expression via activation of SHY2. The protein is Two-component response regulator ARR12 (ARR12) of Arabidopsis thaliana (Mouse-ear cress).